Here is a 494-residue protein sequence, read N- to C-terminus: UDP-N-acetylmuramoyl-L-alanyl-D-glutamate--L-lysine ligase (494 aa).

Ser-30 is a UDP-N-acetyl-alpha-D-muramoyl-L-alanyl-D-glutamate binding site. 110-116 (GTNGKTS) contacts ATP. Residues 152-153 (TT), Ser-179, and Arg-187 each bind UDP-N-acetyl-alpha-D-muramoyl-L-alanyl-D-glutamate. The residue at position 219 (Lys-219) is an N6-carboxylysine. Positions 406–409 (DNPA) match the L-lysine recognition motif motif.

It belongs to the MurCDEF family. MurE subfamily. Post-translationally, carboxylation is probably crucial for Mg(2+) binding and, consequently, for the gamma-phosphate positioning of ATP.

It is found in the cytoplasm. It catalyses the reaction UDP-N-acetyl-alpha-D-muramoyl-L-alanyl-D-glutamate + L-lysine + ATP = UDP-N-acetyl-alpha-D-muramoyl-L-alanyl-gamma-D-glutamyl-L-lysine + ADP + phosphate + H(+). It participates in cell wall biogenesis; peptidoglycan biosynthesis. Catalyzes the addition of L-lysine to the nucleotide precursor UDP-N-acetylmuramoyl-L-alanyl-D-glutamate (UMAG) in the biosynthesis of bacterial cell-wall peptidoglycan. The sequence is that of UDP-N-acetylmuramoyl-L-alanyl-D-glutamate--L-lysine ligase from Staphylococcus aureus (strain Mu3 / ATCC 700698).